A 134-amino-acid polypeptide reads, in one-letter code: Small ribosomal subunit protein uS17c (134 aa).

Residues His-1–Ala-37 constitute a chloroplast transit peptide. The segment at Phe-106–Glu-134 is disordered.

Belongs to the universal ribosomal protein uS17 family. Part of the 30S ribosomal subunit.

The protein localises to the plastid. It localises to the chloroplast. One of the primary rRNA binding proteins, it binds specifically to the 5'-end of 16S ribosomal RNA. This Pisum sativum (Garden pea) protein is Small ribosomal subunit protein uS17c (RPS17).